The sequence spans 872 residues: Cellulose synthase catalytic subunit [UDP-forming] (872 aa).

4 helical membrane passes run 30–50 (SAFS…FIPL), 151–171 (ILGI…TQPF), 173–193 (PLAQ…VRRM), and 230–250 (LVCG…LVLG). The catalytic subdomain A stretch occupies residues 271–364 (LWPSVDIFVP…FVSIFDCDHV (94 aa)). Asp-313 is an active-site residue. Substrate-binding residues include Asp-360 and Asp-362. The interval 441–501 (KPLDEIGGIA…GQRIRWARGM (61 aa)) is catalytic subdomain B. Asp-457 is an active-site residue. Transmembrane regions (helical) follow at residues 525–545 (VNAM…TAPL), 547–567 (FLLL…LFVL), 592–612 (IYET…LINP), 640–660 (IFLV…YFYG), and 668–688 (VVVS…AVAV). A PilZ domain is found at 694 to 790 (QVRRSHRVEM…QHIDFVQCTF (97 aa)). The chain crosses the membrane as a helical span at residues 833–853 (SVKGIFRVLTSLVSWVVSFIP).

The protein belongs to the glycosyltransferase 2 family. It depends on Mg(2+) as a cofactor.

The protein resides in the cell inner membrane. It carries out the reaction [(1-&gt;4)-beta-D-glucosyl](n) + UDP-alpha-D-glucose = [(1-&gt;4)-beta-D-glucosyl](n+1) + UDP + H(+). It functions in the pathway glycan metabolism; bacterial cellulose biosynthesis. Its activity is regulated as follows. Activated by bis-(3'-5') cyclic diguanylic acid (c-di-GMP). Its function is as follows. Catalytic subunit of cellulose synthase. It polymerizes uridine 5'-diphosphate glucose to cellulose, which is produced as an extracellular component for mechanical and chemical protection at the onset of the stationary phase, when the cells exhibit multicellular behavior (rdar morphotype). Coexpression of cellulose and thin aggregative fimbriae leads to a hydrophobic network with tightly packed cells embedded in a highly inert matrix. The protein is Cellulose synthase catalytic subunit [UDP-forming] (bcsA) of Escherichia coli O157:H7.